Reading from the N-terminus, the 479-residue chain is Ribulose bisphosphate carboxylase large chain (479 aa).

Residues methionine 1–serine 2 constitute a propeptide that is removed on maturation. Positions 123 and 173 each coordinate substrate. Catalysis depends on lysine 175, which acts as the Proton acceptor. Lysine 177 provides a ligand contact to substrate. Mg(2+) contacts are provided by lysine 201, aspartate 203, and glutamate 204. Lysine 201 is subject to N6-carboxylysine. Phosphoserine is present on serine 208. Residue histidine 294 is the Proton acceptor of the active site. Arginine 295 and histidine 327 together coordinate substrate. A Phosphothreonine modification is found at threonine 330. Position 379 (serine 379) interacts with substrate.

Belongs to the RuBisCO large chain family. Type I subfamily. In terms of assembly, heterohexadecamer of 8 large chains and 8 small chains; disulfide-linked. The disulfide link is formed within the large subunit homodimers. Mg(2+) is required as a cofactor. Post-translationally, the disulfide bond which can form in the large chain dimeric partners within the hexadecamer appears to be associated with oxidative stress and protein turnover.

The protein localises to the plastid. It localises to the chloroplast. The catalysed reaction is 2 (2R)-3-phosphoglycerate + 2 H(+) = D-ribulose 1,5-bisphosphate + CO2 + H2O. It carries out the reaction D-ribulose 1,5-bisphosphate + O2 = 2-phosphoglycolate + (2R)-3-phosphoglycerate + 2 H(+). RuBisCO catalyzes two reactions: the carboxylation of D-ribulose 1,5-bisphosphate, the primary event in carbon dioxide fixation, as well as the oxidative fragmentation of the pentose substrate in the photorespiration process. Both reactions occur simultaneously and in competition at the same active site. This chain is Ribulose bisphosphate carboxylase large chain, found in Lobularia maritima (Sweet alyssum).